The primary structure comprises 583 residues: Protein LONG AFTER FAR-RED 3 (583 aa).

Residues 7-27 (FPVMIGFVSAAVFLLISVAYL) traverse the membrane as a helical segment. Asn55 and Asn374 each carry an N-linked (GlcNAc...) asparagine glycan.

The protein belongs to the metallo-dependent hydrolases superfamily. In terms of tissue distribution, expressed at low level in seedlings, roots, leaves, stems, flowers, and siliques.

Its subcellular location is the membrane. The protein localises to the cytoplasm. It is found in the perinuclear region. Functionally, required for phyA-controlled responses to continuous far-red light (FRc) conditions, including the inhibition of hypocotyl elongation and the regulation of XTH15/XTR7 expression. The protein is Protein LONG AFTER FAR-RED 3 of Arabidopsis thaliana (Mouse-ear cress).